Here is a 257-residue protein sequence, read N- to C-terminus: Large ribosomal subunit protein uL2 (257 aa).

A disordered region spans residues 210–231 (PHGGGNHQHIGKASTVKRGTSA).

This sequence belongs to the universal ribosomal protein uL2 family.

The protein localises to the cytoplasm. The polypeptide is Large ribosomal subunit protein uL2 (RpL8) (Mamestra brassicae (Cabbage moth)).